Here is a 743-residue protein sequence, read N- to C-terminus: Threonine synthase-like 1 (743 aa).

Lys-281 carries the N6-acetyllysine modification. N6-(pyridoxal phosphate)lysine is present on Lys-351.

The protein belongs to the threonine synthase family. The cofactor is pyridoxal 5'-phosphate.

The sequence is that of Threonine synthase-like 1 (THNSL1) from Macaca fascicularis (Crab-eating macaque).